A 384-amino-acid chain; its full sequence is Lipid-A-disaccharide synthase 1 (384 aa).

Belongs to the LpxB family.

It carries out the reaction a lipid X + a UDP-2-N,3-O-bis[(3R)-3-hydroxyacyl]-alpha-D-glucosamine = a lipid A disaccharide + UDP + H(+). It participates in bacterial outer membrane biogenesis; LPS lipid A biosynthesis. Condensation of UDP-2,3-diacylglucosamine and 2,3-diacylglucosamine-1-phosphate to form lipid A disaccharide, a precursor of lipid A, a phosphorylated glycolipid that anchors the lipopolysaccharide to the outer membrane of the cell. This Legionella pneumophila (strain Paris) protein is Lipid-A-disaccharide synthase 1.